The chain runs to 198 residues: Ribonuclease HII (198 aa).

Residues 6-198 (EQIAGVDEVG…APCQASLLPD (193 aa)) enclose the RNase H type-2 domain. A divalent metal cation contacts are provided by aspartate 12, glutamate 13, and aspartate 108.

Belongs to the RNase HII family. The cofactor is Mn(2+). It depends on Mg(2+) as a cofactor.

Its subcellular location is the cytoplasm. The catalysed reaction is Endonucleolytic cleavage to 5'-phosphomonoester.. In terms of biological role, endonuclease that specifically degrades the RNA of RNA-DNA hybrids. The protein is Ribonuclease HII of Acaryochloris marina (strain MBIC 11017).